A 288-amino-acid chain; its full sequence is Pantothenate synthetase (288 aa).

30–37 (MGALHEGH) provides a ligand contact to ATP. Residue H37 is the Proton donor of the active site. A (R)-pantoate-binding site is contributed by Q61. Q61 is a binding site for beta-alanine. Position 147–150 (147–150 (GEKD)) interacts with ATP. Q153 is a binding site for (R)-pantoate. Residues V176 and 184 to 187 (ISSR) each bind ATP.

This sequence belongs to the pantothenate synthetase family. Homodimer.

It localises to the cytoplasm. The enzyme catalyses (R)-pantoate + beta-alanine + ATP = (R)-pantothenate + AMP + diphosphate + H(+). It functions in the pathway cofactor biosynthesis; (R)-pantothenate biosynthesis; (R)-pantothenate from (R)-pantoate and beta-alanine: step 1/1. Its function is as follows. Catalyzes the condensation of pantoate with beta-alanine in an ATP-dependent reaction via a pantoyl-adenylate intermediate. This Chlorobium phaeobacteroides (strain BS1) protein is Pantothenate synthetase.